The primary structure comprises 836 residues: uncharacterized protein (836 aa).

3 disordered regions span residues 1–25 (MDST…NEEE), 692–718 (DSRS…NNQR), and 789–836 (ESSG…GYAS). Polar residues-rich tracts occupy residues 789–799 (ESSGINVSNTR) and 825–836 (IDSSSAQNGYAS).

The protein resides in the nucleus. This is an uncharacterized protein from Schizosaccharomyces pombe (strain 972 / ATCC 24843) (Fission yeast).